A 467-amino-acid chain; its full sequence is MSSPNIWSTGSSVYSTPVFSQKMTVWILLLLSLYPGFTSQKSDDDYEDYASNKTWVLTPKVPEGDVTVILNNLLEGYDNKLRPDIGVKPTLIHTDMYVNSIGPVNAINMEYTIDIFFAQTWYDRRLKFNSTIKVLRLNSNMVGKIWIPDTFFRNSKKADAHWITTPNRMLRIWNDGRVLYTLRLTIDAECQLQLHNFPMDEHSCPLEFSSYGYPREEIVYQWKRSSVEVGDTRSWRLYQFSFVGLRNTTEVVKTTSGDYVVMSVYFDLSRRMGYFTIQTYIPCTLIVVLSWVSFWINKDAVPARTSLGITTVLTMTTLSTIARKSLPKVSYVTAMDLFVSVCFIFVFSALVEYGTLHYFVSNRKPSKDKDKKKKNPAPTIDIRPRSATIQMNNATHLQERDEEYGYECLDGKDCASFFCCFEDCRTGAWRHGRIHIRIAKMDSYARIFFPTAFCLFNLVYWVSYLYL.

An N-terminal signal peptide occupies residues M1–S39. Residues Q40 to F275 are Extracellular-facing. N52 and N129 each carry an N-linked (GlcNAc...) asparagine glycan. Cysteines 190 and 204 form a disulfide. N247 carries an N-linked (GlcNAc...) asparagine glycan. A helical membrane pass occupies residues T276–I296. The Cytoplasmic portion of the chain corresponds to N297–P302. Residues A303–A322 form a helical membrane-spanning segment. At R323–A334 the chain is on the extracellular side. The helical transmembrane segment at M335 to F359 threads the bilayer. The Cytoplasmic segment spans residues V360 to S443. Residues R425–D442 form an interaction with GABARAP region. The helical transmembrane segment at Y444–Y464 threads the bilayer. At L465–L467 the chain is on the extracellular side.

Belongs to the ligand-gated ion channel (TC 1.A.9) family. Gamma-aminobutyric acid receptor (TC 1.A.9.5) subfamily. GABRG2 sub-subfamily. Heteropentamer, formed by a combination of alpha (GABRA1-6), beta (GABRB1-3), gamma (GABRG1-3), delta (GABRD), epsilon (GABRE), rho (GABRR1-3), pi (GABRP) and theta (GABRQ) chains, each subunit exhibiting distinct physiological and pharmacological properties. Interacts with GABARAP. Interacts with KIF21B. Identified in a complex of 720 kDa composed of LHFPL4, NLGN2, GABRA1, GABRB2, GABRG2 and GABRB3. Interacts with LHFPL4. Interacts with SHISA7; interaction leads to the regulation of GABA(A) receptor trafficking, channel deactivation kinetics and pharmacology. In terms of processing, palmitoylated by ZDHHC3/GODZ; required for the accumulation of GABA(A) receptors at the postsynaptic membrane of inhibitory GABAergic synapses. Glycosylated.

It is found in the postsynaptic cell membrane. Its subcellular location is the cell membrane. The protein localises to the cell projection. It localises to the dendrite. The protein resides in the cytoplasmic vesicle membrane. It carries out the reaction chloride(in) = chloride(out). With respect to regulation, allosterically activated by benzodiazepines. Activated by pentobarbital. Inhibited by the antagonist bicuculline. Inhibited by zinc ions. Potentiated by histamine. Functionally, gamma subunit of the heteropentameric ligand-gated chloride channel gated by gamma-aminobutyric acid (GABA), a major inhibitory neurotransmitter in the brain. GABA-gated chloride channels, also named GABA(A) receptors (GABAAR), consist of five subunits arranged around a central pore and contain GABA active binding site(s) located at the alpha and beta subunit interface(s). When activated by GABA, GABAARs selectively allow the flow of chloride anions across the cell membrane down their electrochemical gradient. Gamma-2/GABRG2-containing GABAARs are found at both synaptic and extrasynaptic sites. Chloride influx into the postsynaptic neuron following GABAAR opening decreases the neuron ability to generate a new action potential, thereby reducing nerve transmission. GABAARs containing alpha-1 and beta-2 or -3 subunits exhibit synaptogenic activity; the gamma-2 subunit being necessary but not sufficient to induce rapid synaptic contacts formation. Extrasynaptic gamma-2-containing receptors contribute to the tonic GABAergic inhibition. GABAARs function also as histamine receptor where histamine binds at the interface of two neighboring beta subunits and potentiates GABA response in a gamma-2 subunit-controlled manner. This Pongo abelii (Sumatran orangutan) protein is Gamma-aminobutyric acid receptor subunit gamma-2 (GABRG2).